A 189-amino-acid polypeptide reads, in one-letter code: MNEEIMTQLRSHREVMEAVERELTPRIAAFAGMLVAALKGGKKLLVMGNGGSAADAQHFAAEIVGRFKMERRGLPAVALTTDTSILTAIGNDYGFDAVFRRQVEALADEGDVVVGLSTSGSSRNVYDALALANDRGCITVGLLGRDGGTLKDIVDLDVTVPSGDTPRIQEGHITIIHIVCDLVEKGLFK.

The SIS domain occupies 34–189; that stretch reads LVAALKGGKK…CDLVEKGLFK (156 aa). 49–51 is a binding site for substrate; the sequence is NGG. Positions 58 and 62 each coordinate Zn(2+). Residues E62, 91-92, 117-119, S122, and Q169 contribute to the substrate site; these read ND and STS. 2 residues coordinate Zn(2+): Q169 and H177.

The protein belongs to the SIS family. GmhA subfamily. Homotetramer. Zn(2+) serves as cofactor.

It is found in the cytoplasm. The catalysed reaction is 2 D-sedoheptulose 7-phosphate = D-glycero-alpha-D-manno-heptose 7-phosphate + D-glycero-beta-D-manno-heptose 7-phosphate. It functions in the pathway carbohydrate biosynthesis; D-glycero-D-manno-heptose 7-phosphate biosynthesis; D-glycero-alpha-D-manno-heptose 7-phosphate and D-glycero-beta-D-manno-heptose 7-phosphate from sedoheptulose 7-phosphate: step 1/1. Catalyzes the isomerization of sedoheptulose 7-phosphate in D-glycero-D-manno-heptose 7-phosphate. The sequence is that of Phosphoheptose isomerase from Geobacter metallireducens (strain ATCC 53774 / DSM 7210 / GS-15).